The sequence spans 327 residues: DNA polymerase III subunit delta' (327 aa).

DNA polymerase III contains a core (composed of alpha, epsilon and theta chains) that associates with a tau subunit. This core dimerizes to form the POLIII' complex. PolIII' associates with the gamma complex (composed of gamma, delta, delta', psi and chi chains) and with the beta chain to form the complete DNA polymerase III complex.

It carries out the reaction DNA(n) + a 2'-deoxyribonucleoside 5'-triphosphate = DNA(n+1) + diphosphate. DNA polymerase III is a complex, multichain enzyme responsible for most of the replicative synthesis in bacteria. This DNA polymerase also exhibits 3' to 5' exonuclease activity. In Haemophilus influenzae (strain ATCC 51907 / DSM 11121 / KW20 / Rd), this protein is DNA polymerase III subunit delta' (holB).